Reading from the N-terminus, the 149-residue chain is Deoxyuridine 5'-triphosphate nucleotidohydrolase (149 aa).

Substrate is bound by residues 68 to 70, N81, 85 to 87, and K95; these read RSG and TVD.

The protein belongs to the dUTPase family. Mg(2+) is required as a cofactor.

The catalysed reaction is dUTP + H2O = dUMP + diphosphate + H(+). The protein operates within pyrimidine metabolism; dUMP biosynthesis; dUMP from dCTP (dUTP route): step 2/2. This enzyme is involved in nucleotide metabolism: it produces dUMP, the immediate precursor of thymidine nucleotides and it decreases the intracellular concentration of dUTP so that uracil cannot be incorporated into DNA. This Wolinella succinogenes (strain ATCC 29543 / DSM 1740 / CCUG 13145 / JCM 31913 / LMG 7466 / NCTC 11488 / FDC 602W) (Vibrio succinogenes) protein is Deoxyuridine 5'-triphosphate nucleotidohydrolase.